A 367-amino-acid polypeptide reads, in one-letter code: Quinolinate synthase (367 aa).

Iminosuccinate is bound by residues H64 and S82. A [4Fe-4S] cluster-binding site is contributed by C127. Iminosuccinate-binding positions include 153–155 (YVN) and S170. C216 provides a ligand contact to [4Fe-4S] cluster. Residues 242–244 (HPE) and T259 each bind iminosuccinate. C302 serves as a coordination point for [4Fe-4S] cluster.

Belongs to the quinolinate synthase family. Type 2 subfamily. [4Fe-4S] cluster serves as cofactor.

It localises to the cytoplasm. It catalyses the reaction iminosuccinate + dihydroxyacetone phosphate = quinolinate + phosphate + 2 H2O + H(+). It participates in cofactor biosynthesis; NAD(+) biosynthesis; quinolinate from iminoaspartate: step 1/1. Its function is as follows. Catalyzes the condensation of iminoaspartate with dihydroxyacetone phosphate to form quinolinate. This chain is Quinolinate synthase, found in Caulobacter vibrioides (strain ATCC 19089 / CIP 103742 / CB 15) (Caulobacter crescentus).